Consider the following 460-residue polypeptide: Carboxypeptidase DacB (460 aa).

Positions 1-28 (MRPTRWRRSTHVAVGVAVLALVVAVVAA) are cleaved as a signal peptide. Positions 39 to 64 (AAEAVPPAPPPATADPGVVPVDLSAP) are disordered. Ser-113 acts as the Acyl-ester intermediate in catalysis. Lys-116 (proton acceptor) is an active-site residue. Residue Ser-294 is part of the active site.

It belongs to the peptidase S13 family.

In terms of biological role, carboxypeptidase that cleaves terminal D-alanine from peptidoglycan in the mycobacterial cell wall. May cleave L-Lys-D-Ala and/or D-Ala-D-Ala peptide bonds. Exerts important effects on mycobacterial cell morphology and cell division. This Mycolicibacterium smegmatis (strain ATCC 700084 / mc(2)155) (Mycobacterium smegmatis) protein is Carboxypeptidase DacB.